The chain runs to 265 residues: Tryptophan synthase alpha chain (265 aa).

Residues E49 and D60 each act as proton acceptor in the active site.

It belongs to the TrpA family. In terms of assembly, tetramer of two alpha and two beta chains.

It catalyses the reaction (1S,2R)-1-C-(indol-3-yl)glycerol 3-phosphate + L-serine = D-glyceraldehyde 3-phosphate + L-tryptophan + H2O. The protein operates within amino-acid biosynthesis; L-tryptophan biosynthesis; L-tryptophan from chorismate: step 5/5. Functionally, the alpha subunit is responsible for the aldol cleavage of indoleglycerol phosphate to indole and glyceraldehyde 3-phosphate. This chain is Tryptophan synthase alpha chain, found in Ralstonia nicotianae (strain ATCC BAA-1114 / GMI1000) (Ralstonia solanacearum).